The sequence spans 519 residues: MERGAAPGGGKVPVFRLRGITKRFGGVTAVEGVDFELLPGEVHALVGENGAGKSTLMKIVGGLYAPDEGSLEVGGEPAAFSSPRESEAAGIAMIPQELDLFPELSVAENLYVGRRRPRTRWGGIDWGRMRREAGEKLASLGVGLDVSAPVKRLSTANQQLVAIARALLREARAVVMDEPTAALTGREAERLFGIIAGLRRRGVGVVYISHRLEEIFRIADRITVLRDGHLVKTAPASALDPDELVRLMVGRPLSEFFSRHPHEPGEVVLEVRGLGREGEFADVDLVLRRGEVVGLAGLIGAGRTELAQTIFGIRTPDRGEVRVFGEVLPPGSPREAMERGVFYVPEERKSQGLIAPFSVKDNITLSVLERFTRFGFVSRGPERELAGRLAGALSVRGGGIFDPVSRLSGGNQQKVVLAKSLAREPAVLLLDEPTRGIDVGAKSEIYRLIDRLAGEGRAVLLISSELEEILSMSDRVVVMREGRISGEFGREEATQERIMAAATGVRGPSAAVAEEEAGR.

ABC transporter domains lie at 15–252 and 262–506; these read FRLR…VGRP and HEPG…TGVR. 47–54 provides a ligand contact to ATP; sequence GENGAGKS.

The protein belongs to the ABC transporter superfamily. Ribose importer (TC 3.A.1.2.1) family. The complex is composed of an ATP-binding protein (RbsA), two transmembrane proteins (RbsC) and a solute-binding protein (RbsB).

Its subcellular location is the cell membrane. The catalysed reaction is D-ribose(out) + ATP + H2O = D-ribose(in) + ADP + phosphate + H(+). Its function is as follows. Part of the ABC transporter complex RbsABC involved in ribose import. Responsible for energy coupling to the transport system. In Rubrobacter xylanophilus (strain DSM 9941 / JCM 11954 / NBRC 16129 / PRD-1), this protein is Ribose import ATP-binding protein RbsA 2.